A 79-amino-acid chain; its full sequence is Acyl carrier protein (79 aa).

The Carrier domain maps to 2–77; sequence STIEERVKKI…QAIDYVKVHV (76 aa). O-(pantetheine 4'-phosphoryl)serine is present on Ser37.

It belongs to the acyl carrier protein (ACP) family. In terms of processing, 4'-phosphopantetheine is transferred from CoA to a specific serine of apo-ACP by AcpS. This modification is essential for activity because fatty acids are bound in thioester linkage to the sulfhydryl of the prosthetic group.

The protein resides in the cytoplasm. The protein operates within lipid metabolism; fatty acid biosynthesis. Functionally, carrier of the growing fatty acid chain in fatty acid biosynthesis. In Xanthomonas albilineans, this protein is Acyl carrier protein.